We begin with the raw amino-acid sequence, 165 residues long: Xanthine-guanine phosphoribosyltransferase (165 aa).

Residues R41–G42 and D98–T106 contribute to the 5-phospho-alpha-D-ribose 1-diphosphate site. D99 is a binding site for Mg(2+). Residues D102 and I145 each contribute to the guanine site. Positions 102 and 145 each coordinate xanthine. GMP is bound by residues D102–T106 and W144–I145.

This sequence belongs to the purine/pyrimidine phosphoribosyltransferase family. XGPT subfamily. As to quaternary structure, homotetramer. It depends on Mg(2+) as a cofactor.

Its subcellular location is the cell inner membrane. The enzyme catalyses GMP + diphosphate = guanine + 5-phospho-alpha-D-ribose 1-diphosphate. It catalyses the reaction XMP + diphosphate = xanthine + 5-phospho-alpha-D-ribose 1-diphosphate. It carries out the reaction IMP + diphosphate = hypoxanthine + 5-phospho-alpha-D-ribose 1-diphosphate. Its pathway is purine metabolism; GMP biosynthesis via salvage pathway; GMP from guanine: step 1/1. The protein operates within purine metabolism; XMP biosynthesis via salvage pathway; XMP from xanthine: step 1/1. In terms of biological role, purine salvage pathway enzyme that catalyzes the transfer of the ribosyl-5-phosphate group from 5-phospho-alpha-D-ribose 1-diphosphate (PRPP) to the N9 position of the 6-oxopurines guanine and xanthine to form the corresponding ribonucleotides GMP (guanosine 5'-monophosphate) and XMP (xanthosine 5'-monophosphate), with the release of PPi. To a lesser extent, also acts on hypoxanthine. This is Xanthine-guanine phosphoribosyltransferase from Agrobacterium fabrum (strain C58 / ATCC 33970) (Agrobacterium tumefaciens (strain C58)).